The primary structure comprises 729 residues: 1,4-alpha-glucan branching enzyme GlgB (729 aa).

The active-site Nucleophile is the D407. The active-site Proton donor is E460.

Belongs to the glycosyl hydrolase 13 family. GlgB subfamily. In terms of assembly, monomer.

The catalysed reaction is Transfers a segment of a (1-&gt;4)-alpha-D-glucan chain to a primary hydroxy group in a similar glucan chain.. It participates in glycan biosynthesis; glycogen biosynthesis. Its function is as follows. Catalyzes the formation of the alpha-1,6-glucosidic linkages in glycogen by scission of a 1,4-alpha-linked oligosaccharide from growing alpha-1,4-glucan chains and the subsequent attachment of the oligosaccharide to the alpha-1,6 position. The sequence is that of 1,4-alpha-glucan branching enzyme GlgB from Pseudoalteromonas atlantica (strain T6c / ATCC BAA-1087).